Reading from the N-terminus, the 220-residue chain is Adenylate kinase (220 aa).

10-15 serves as a coordination point for ATP; sequence GAGKGT. The tract at residues 30–59 is NMP; sequence STGDLFRANISQQTELGKLAKSYMDEGNLV. AMP-binding positions include Thr31, Arg36, 57–59, 85–88, and Gln92; these read NLV and GFPR. Residues 126-164 are LID; that stretch reads GRRICRNDSAHVFHVSYKPPKQEGVCDVCGGELYQRDDD. Residues Arg127 and 137–138 each bind ATP; that span reads VF. Arg161 and Arg172 together coordinate AMP. Gly200 provides a ligand contact to ATP.

It belongs to the adenylate kinase family. In terms of assembly, monomer.

It is found in the cytoplasm. It carries out the reaction AMP + ATP = 2 ADP. The protein operates within purine metabolism; AMP biosynthesis via salvage pathway; AMP from ADP: step 1/1. In terms of biological role, catalyzes the reversible transfer of the terminal phosphate group between ATP and AMP. Plays an important role in cellular energy homeostasis and in adenine nucleotide metabolism. This Streptomyces avermitilis (strain ATCC 31267 / DSM 46492 / JCM 5070 / NBRC 14893 / NCIMB 12804 / NRRL 8165 / MA-4680) protein is Adenylate kinase.